A 428-amino-acid chain; its full sequence is Serine--tRNA ligase (428 aa).

An L-serine-binding site is contributed by 231-233 (TAE). Residue 262 to 264 (RAE) coordinates ATP. Glu-285 is a binding site for L-serine. Residue 349 to 352 (EISS) participates in ATP binding. Ser-385 contributes to the L-serine binding site.

It belongs to the class-II aminoacyl-tRNA synthetase family. Type-1 seryl-tRNA synthetase subfamily. As to quaternary structure, homodimer. The tRNA molecule binds across the dimer.

It localises to the cytoplasm. The enzyme catalyses tRNA(Ser) + L-serine + ATP = L-seryl-tRNA(Ser) + AMP + diphosphate + H(+). The catalysed reaction is tRNA(Sec) + L-serine + ATP = L-seryl-tRNA(Sec) + AMP + diphosphate + H(+). It functions in the pathway aminoacyl-tRNA biosynthesis; selenocysteinyl-tRNA(Sec) biosynthesis; L-seryl-tRNA(Sec) from L-serine and tRNA(Sec): step 1/1. Functionally, catalyzes the attachment of serine to tRNA(Ser). Is also able to aminoacylate tRNA(Sec) with serine, to form the misacylated tRNA L-seryl-tRNA(Sec), which will be further converted into selenocysteinyl-tRNA(Sec). This chain is Serine--tRNA ligase, found in Methylorubrum extorquens (strain PA1) (Methylobacterium extorquens).